A 105-amino-acid chain; its full sequence is MIPGEIIVNKALGEIELNQGYDKYTLSVANIGDRPIQVGSHYHFYEVNEFLSFDREPTLGFRLDIPAGMAVRFEPGQSRTVELVAYSGKRIIQGFDGKVMGKIKE.

It belongs to the urease beta subunit family. As to quaternary structure, heterotrimer of UreA (gamma), UreB (beta) and UreC (alpha) subunits. Three heterotrimers associate to form the active enzyme.

It is found in the cytoplasm. The catalysed reaction is urea + 2 H2O + H(+) = hydrogencarbonate + 2 NH4(+). It functions in the pathway nitrogen metabolism; urea degradation; CO(2) and NH(3) from urea (urease route): step 1/1. The chain is Urease subunit beta from Shewanella halifaxensis (strain HAW-EB4).